The primary structure comprises 92 residues: Nodulation protein F (92 aa).

Residues 4–88 (QLTVEIIAAI…DVVEAVRGLI (85 aa)) enclose the Carrier domain. S45 is modified (O-(pantetheine 4'-phosphoryl)serine).

Post-translationally, 4'-phosphopantetheine is transferred from CoA to a specific serine of apo-NodF.

Its function is as follows. Proposed to synthesize nod factor fatty acyl chain. Involved in trans-2,trans-4,trans-6,cis-11-octadecatetraenoic acid biosynthesis. This Rhizobium leguminosarum bv. trifolii protein is Nodulation protein F (nodF).